A 147-amino-acid polypeptide reads, in one-letter code: Transthyretin (147 aa).

A signal peptide spans 1-20 (MASFRLLLLCLAGLVFVSEA). Residue Cys30 is modified to Sulfocysteine. Position 35 (Lys35) interacts with L-thyroxine. Position 62 is a 4-carboxyglutamate (Glu62). At Ser72 the chain carries Phosphoserine. Glu74 contacts L-thyroxine. N-linked (GlcNAc...) asparagine glycosylation occurs at Asn118. Residue Ser137 participates in L-thyroxine binding.

The protein belongs to the transthyretin family. As to quaternary structure, homotetramer. Dimer of dimers. In the homotetramer, subunits assemble around a central channel that can accommodate two ligand molecules. Interacts with RBP4. Sulfonation of the reactive cysteine Cys-30 enhances the stability of the native conformation of TTR, avoiding misassembly of the protein leading to amyloid formation. In terms of tissue distribution, highly expressed in the choroid plexus.

The protein localises to the secreted. Functionally, thyroid hormone-binding protein. Probably transports thyroxine from the bloodstream to the brain. The sequence is that of Transthyretin (TTR) from Ovis aries (Sheep).